Reading from the N-terminus, the 486-residue chain is Cardiolipin synthase A (486 aa).

A run of 2 helical transmembrane segments spans residues 3-23 and 38-58; these read TFYTVVSWLVILGYWLLIAGV and MAWLLIIYILPLVGIIAYLSF. PLD phosphodiesterase domains lie at 219–246 and 399–426; these read MDLRQHRKMIMIDNYIAYTGSMNMVDPR and EGGLLHTKSVLVDGELSLVGTVNLDMRS. Residues His-224, Lys-226, Asp-231, His-404, Lys-406, and Asp-411 contribute to the active site.

The protein belongs to the phospholipase D family. Cardiolipin synthase subfamily. ClsA sub-subfamily.

The protein localises to the cell inner membrane. It catalyses the reaction 2 a 1,2-diacyl-sn-glycero-3-phospho-(1'-sn-glycerol) = a cardiolipin + glycerol. Its function is as follows. Catalyzes the reversible phosphatidyl group transfer from one phosphatidylglycerol molecule to another to form cardiolipin (CL) (diphosphatidylglycerol) and glycerol. This chain is Cardiolipin synthase A, found in Escherichia fergusonii (strain ATCC 35469 / DSM 13698 / CCUG 18766 / IAM 14443 / JCM 21226 / LMG 7866 / NBRC 102419 / NCTC 12128 / CDC 0568-73).